The sequence spans 283 residues: 4-diphosphocytidyl-2-C-methyl-D-erythritol kinase (283 aa).

Lys10 is an active-site residue. 99 to 109 serves as a coordination point for ATP; sequence PMGGGLGGGSS. The active site involves Asp141.

It belongs to the GHMP kinase family. IspE subfamily. In terms of assembly, homodimer.

The catalysed reaction is 4-CDP-2-C-methyl-D-erythritol + ATP = 4-CDP-2-C-methyl-D-erythritol 2-phosphate + ADP + H(+). It functions in the pathway isoprenoid biosynthesis; isopentenyl diphosphate biosynthesis via DXP pathway; isopentenyl diphosphate from 1-deoxy-D-xylulose 5-phosphate: step 3/6. In terms of biological role, catalyzes the phosphorylation of the position 2 hydroxy group of 4-diphosphocytidyl-2C-methyl-D-erythritol. In Shigella boydii serotype 18 (strain CDC 3083-94 / BS512), this protein is 4-diphosphocytidyl-2-C-methyl-D-erythritol kinase.